A 151-amino-acid polypeptide reads, in one-letter code: UPF0208 membrane protein YPTB2595 (151 aa).

2 helical membrane-spanning segments follow: residues 46-66 and 69-89; these read FGIRFMPPLAIFTLTWQIALG and LGPAIATALFACGLPLQGLWW.

The protein belongs to the UPF0208 family.

It is found in the cell inner membrane. In Yersinia pseudotuberculosis serotype I (strain IP32953), this protein is UPF0208 membrane protein YPTB2595.